We begin with the raw amino-acid sequence, 252 residues long: Transcriptional regulatory protein HptR (252 aa).

Positions lysine 3–valine 118 constitute a Response regulatory domain. At aspartate 55 the chain carries 4-aspartylphosphate. The HTH araC/xylS-type domain occupies asparagine 153–glutamine 250. 2 DNA-binding regions (H-T-H motif) span residues serine 170–valine 191 and histidine 217–leucine 240.

Phosphorylated by HptS.

It localises to the cytoplasm. Functionally, member of the two-component regulatory system HptS/HptR that regulates genes involved in hexose phosphate transport system in response to changes in extracellular phosphate sources. Activates uhpT expression to facilitate glucose-6-phosphate/G6P utilization by directly binding to its promoter. Antagonizes CcpA-dependent transcription of a subset of CcpA-regulated genes involved in antibiotic susceptibility. This is Transcriptional regulatory protein HptR (hptR) from Staphylococcus aureus (strain NCTC 8325 / PS 47).